We begin with the raw amino-acid sequence, 285 residues long: Alpha-acetolactate decarboxylase (285 aa).

The first 25 residues, 1–25 (MKKNIITSITSLALVAGLSLTAFAA), serve as a signal peptide directing secretion.

Belongs to the alpha-acetolactate decarboxylase family.

The catalysed reaction is (2S)-2-acetolactate + H(+) = (R)-acetoin + CO2. It participates in polyol metabolism; (R,R)-butane-2,3-diol biosynthesis; (R,R)-butane-2,3-diol from pyruvate: step 2/3. Converts acetolactate into acetoin, which can be excreted by the cells. This may be a mechanism for controlling the internal pH of cells in the stationary stage. The chain is Alpha-acetolactate decarboxylase (aldB) from Brevibacillus brevis (Bacillus brevis).